Here is a 541-residue protein sequence, read N- to C-terminus: Coiled-coil domain-containing protein 116 (541 aa).

Residues 79 to 102 (QVLDSLQTVVEQATERLAAMKTEA) adopt a coiled-coil conformation. A disordered region spans residues 346–397 (LPGNSDLLQPSSKASIPTNREARGEPCDSLTTAYSPKTSHRKSKGRRGSPPN). Over residues 351-363 (DLLQPSSKASIPT) the composition is skewed to polar residues. Residues 383–392 (TSHRKSKGRR) are compositionally biased toward basic residues. Position 394 is a phosphoserine (serine 394).

The protein resides in the cytoplasm. It is found in the cytoskeleton. Its subcellular location is the microtubule organizing center. It localises to the centrosome. This is Coiled-coil domain-containing protein 116 (Ccdc116) from Mus musculus (Mouse).